A 60-amino-acid chain; its full sequence is uncharacterized protein (60 aa).

The helical transmembrane segment at 11-33 threads the bilayer; it reads VFTVGFITGGVTPVMVSFVWPAA. N-linked (GlcNAc...) asparagine; by host glycans are attached at residues asparagine 40 and asparagine 57.

The protein localises to the host membrane. This is an uncharacterized protein from African swine fever virus (strain Badajoz 1971 Vero-adapted) (Ba71V).